The primary structure comprises 179 residues: Nicotinamide-nucleotide adenylyltransferase (179 aa).

It belongs to the archaeal NMN adenylyltransferase family.

It is found in the cytoplasm. It catalyses the reaction beta-nicotinamide D-ribonucleotide + ATP + H(+) = diphosphate + NAD(+). It functions in the pathway cofactor biosynthesis; NAD(+) biosynthesis; NAD(+) from nicotinamide D-ribonucleotide: step 1/1. The chain is Nicotinamide-nucleotide adenylyltransferase from Thermoplasma acidophilum (strain ATCC 25905 / DSM 1728 / JCM 9062 / NBRC 15155 / AMRC-C165).